A 209-amino-acid chain; its full sequence is Ribonuclease HII (209 aa).

An RNase H type-2 domain is found at 5–202 (SMTLGIDEAG…KNRILNPKLL (198 aa)). Asp11, Glu12, and Asp108 together coordinate a divalent metal cation.

Belongs to the RNase HII family. The cofactor is Mn(2+). Requires Mg(2+) as cofactor.

It is found in the cytoplasm. It catalyses the reaction Endonucleolytic cleavage to 5'-phosphomonoester.. Its function is as follows. Endonuclease that specifically degrades the RNA of RNA-DNA hybrids. The sequence is that of Ribonuclease HII (rnhB) from Helicobacter pylori (strain J99 / ATCC 700824) (Campylobacter pylori J99).